The primary structure comprises 66 residues: Large ribosomal subunit protein bL33 (66 aa).

It belongs to the bacterial ribosomal protein bL33 family.

This is Large ribosomal subunit protein bL33 from Wolbachia sp. subsp. Brugia malayi (strain TRS).